Here is a 124-residue protein sequence, read N- to C-terminus: Putative iron-sulfur cluster insertion protein ErpA (124 aa).

3 residues coordinate iron-sulfur cluster: C52, C116, and C118.

It belongs to the HesB/IscA family. In terms of assembly, homodimer. It depends on iron-sulfur cluster as a cofactor.

Functionally, required for insertion of 4Fe-4S clusters. This Ralstonia pickettii (strain 12J) protein is Putative iron-sulfur cluster insertion protein ErpA.